The sequence spans 173 residues: Photosystem I assembly protein Ycf3 (173 aa).

3 TPR repeats span residues 35–68, 72–105, and 120–153; these read AFVY…EEDP, SYIL…NPRM, and GEKA…APNN.

This sequence belongs to the Ycf3 family.

The protein resides in the cellular thylakoid membrane. In terms of biological role, essential for the assembly of the photosystem I (PSI) complex. May act as a chaperone-like factor to guide the assembly of the PSI subunits. This Rippkaea orientalis (strain PCC 8801 / RF-1) (Cyanothece sp. (strain PCC 8801)) protein is Photosystem I assembly protein Ycf3.